Reading from the N-terminus, the 596-residue chain is Ferredoxin--nitrite reductase, chloroplastic (596 aa).

A chloroplast-targeting transit peptide spans 1-28 (MASSASLQRFLPPYPHAAASRCRPPGVR). The interval 1-56 (MASSASLQRFLPPYPHAAASRCRPPGVRARPVQSSTVSAPSSSTPAADEAVSAERL) is disordered. A compositionally biased stretch (low complexity) spans 31-47 (PVQSSTVSAPSSSTPAA). [4Fe-4S] cluster-binding residues include cysteine 474, cysteine 480, cysteine 515, and cysteine 519. Cysteine 519 provides a ligand contact to siroheme.

It belongs to the nitrite and sulfite reductase 4Fe-4S domain family. In terms of assembly, monomer. Siroheme is required as a cofactor. The cofactor is [4Fe-4S] cluster.

Its subcellular location is the plastid. It localises to the chloroplast. It catalyses the reaction 6 oxidized [2Fe-2S]-[ferredoxin] + NH4(+) + 2 H2O = nitrite + 6 reduced [2Fe-2S]-[ferredoxin] + 8 H(+). Its pathway is nitrogen metabolism; nitrate reduction (assimilation). In terms of biological role, catalyzes the six-electron reduction of nitrite to ammonium. The polypeptide is Ferredoxin--nitrite reductase, chloroplastic (Oryza sativa subsp. japonica (Rice)).